Reading from the N-terminus, the 580-residue chain is MHLSAVFNALLVSVLAAVLWKHVRLREHAATLEEELALGQQSLDPVLGLKIDYPKALQILMEGGTHMVCTGRTHTDRICRFKWLCYSNEAEEFIFFHGNSSVMLPNLGSRRFQPALLDLSTVEDHNAQYFNFVELPAAALRFMPKPVFVPDVALIANRFNPDNLMHVFHDDLLPLFYTLRQFPGLAQEARLFFMEGWGEGAHFDLYKLLSPKQPLLRAQLKTLGRLLCFSHAFVGLSKVTTWYQYGFVQPQGPKANILVSGNEIRQFTRFMTERLNVSHAGAPLGEEYILVFSRTQNRLILNEAELLLELAQEFQMKTVTVSLEDHTFADVVRLVSNASMLVSMHGAQLVTALFLPRGATVVELFPYAVNPDHYTPYKTLATLPGMDLQYVAWRNMIRENTVTHPERPWDQGGITHLDRAEQARILQSREVPRHLCCRNPEWLFRIYQDTRVDIPSLMQSIRRVVKGRPGPRRQRWAISLYPGKVREARCQASVQGATEARLSVSWQIPWNLKYLKVREVKYEVWLQEQGENTYVPYMLTLQNHTFTENIKPFTTYLVWVRCIFNRSLLGPFADVLVCST.

Over 1-4 the chain is Cytoplasmic; the sequence is MHLS. Residues 5 to 25 traverse the membrane as a helical; Signal-anchor for type II membrane protein segment; it reads AVFNALLVSVLAAVLWKHVRL. Topologically, residues 26 to 580 are lumenal; that stretch reads REHAATLEEE…PFADVLVCST (555 aa). 2 N-linked (GlcNAc...) asparagine glycosylation sites follow: Asn-99 and Asn-276. One can recognise a Fibronectin type-III domain in the interval 488–580; the sequence is ARCQASVQGA…PFADVLVCST (93 aa).

The protein belongs to the glycosyltransferase 61 family. In terms of tissue distribution, mainly expressed in the central nervous system.

It localises to the endoplasmic reticulum membrane. It carries out the reaction 3-O-(alpha-D-mannosyl)-L-threonyl-[protein] + UDP-N-acetyl-alpha-D-glucosamine = 3-O-(N-acetyl-beta-D-glucosaminyl-(1-&gt;4)-alpha-D-mannosyl)-L-threonyl-[protein] + UDP + H(+). It functions in the pathway protein modification; protein glycosylation. Its function is as follows. O-linked mannose beta-1,4-N-acetylglucosaminyltransferase that transfers UDP-N-acetyl-D-glucosamine to the 4-position of the mannose to generate N-acetyl-D-glucosamine-beta-1,4-O-D-mannosylprotein. Involved in the biosynthesis of the phosphorylated O-mannosyl trisaccharide (N-acetylgalactosamine-beta-3-N-acetylglucosamine-beta-4-(phosphate-6-)mannose), a carbohydrate structure present in alpha-dystroglycan (DAG1), which is required for binding laminin G-like domain-containing extracellular proteins with high affinity. This is Protein O-linked-mannose beta-1,4-N-acetylglucosaminyltransferase 2 (Pomgnt2) from Mus musculus (Mouse).